A 143-amino-acid polypeptide reads, in one-letter code: MFARILGLDVGTKTVGVSVSDLLGMTAQPVETIKIDSEAGELGFDRLAVLIKEYKPEKVVLGLPKHMNGDEGIRAEASRDYGTKLANKFGLEVAYQDERLTTAQAEKVLIDGGVRRKDRKKSIDKLAAVLILQNYLDAHALKL.

Belongs to the YqgF nuclease family.

It localises to the cytoplasm. Could be a nuclease involved in processing of the 5'-end of pre-16S rRNA. This is Putative pre-16S rRNA nuclease from Lactococcus lactis subsp. cremoris (strain MG1363).